A 1047-amino-acid chain; its full sequence is Carbamoyl phosphate synthase large chain (1047 aa).

The carboxyphosphate synthetic domain stretch occupies residues 1–398; that stretch reads MPRRDDIHRI…ALMKAIASLD (398 aa). Arginine 129, arginine 169, glycine 175, glycine 176, glutamate 208, leucine 210, glutamate 215, glycine 241, valine 242, histidine 243, glutamine 284, and glutamate 296 together coordinate ATP. An ATP-grasp 1 domain is found at 133-325; sequence YEFLKAMGEP…IARIAAKIAA (193 aa). Residues glutamine 284, glutamate 296, and asparagine 298 each coordinate Mg(2+). Glutamine 284, glutamate 296, and asparagine 298 together coordinate Mn(2+). Residues 399–539 form an oligomerization domain region; sequence NAFSSNIRLH…YSTYEDEDET (141 aa). The tract at residues 540-916 is carbamoyl phosphate synthetic domain; it reads PDLSGSIMII…ALRKSLQRSI (377 aa). In terms of domain architecture, ATP-grasp 2 spans 665–854; that stretch reads SRVIEGLGIK…WVRLAVECMI (190 aa). Residues arginine 701, lysine 738, leucine 740, glutamate 745, glycine 770, valine 771, histidine 772, serine 773, glutamine 813, and glutamate 825 each contribute to the ATP site. Mg(2+) is bound by residues glutamine 813, glutamate 825, and asparagine 827. Residues glutamine 813, glutamate 825, and asparagine 827 each contribute to the Mn(2+) site. Residues 910-1047 enclose the MGS-like domain; the sequence is KSLQRSISSV…REIGDYLQVS (138 aa). Residues 916–1047 are allosteric domain; sequence ISSVLITVRD…REIGDYLQVS (132 aa).

This sequence belongs to the CarB family. As to quaternary structure, composed of two chains; the small (or glutamine) chain promotes the hydrolysis of glutamine to ammonia, which is used by the large (or ammonia) chain to synthesize carbamoyl phosphate. Tetramer of heterodimers (alpha,beta)4. Mg(2+) is required as a cofactor. It depends on Mn(2+) as a cofactor.

It carries out the reaction hydrogencarbonate + L-glutamine + 2 ATP + H2O = carbamoyl phosphate + L-glutamate + 2 ADP + phosphate + 2 H(+). It catalyses the reaction hydrogencarbonate + NH4(+) + 2 ATP = carbamoyl phosphate + 2 ADP + phosphate + 2 H(+). Its pathway is amino-acid biosynthesis; L-arginine biosynthesis; carbamoyl phosphate from bicarbonate: step 1/1. It functions in the pathway pyrimidine metabolism; UMP biosynthesis via de novo pathway; (S)-dihydroorotate from bicarbonate: step 1/3. Large subunit of the glutamine-dependent carbamoyl phosphate synthetase (CPSase). CPSase catalyzes the formation of carbamoyl phosphate from the ammonia moiety of glutamine, carbonate, and phosphate donated by ATP, constituting the first step of 2 biosynthetic pathways, one leading to arginine and/or urea and the other to pyrimidine nucleotides. The large subunit (synthetase) binds the substrates ammonia (free or transferred from glutamine from the small subunit), hydrogencarbonate and ATP and carries out an ATP-coupled ligase reaction, activating hydrogencarbonate by forming carboxy phosphate which reacts with ammonia to form carbamoyl phosphate. This is Carbamoyl phosphate synthase large chain from Thermoplasma acidophilum (strain ATCC 25905 / DSM 1728 / JCM 9062 / NBRC 15155 / AMRC-C165).